Consider the following 320-residue polypeptide: Olfactory receptor 2AT4 (320 aa).

At 1-31 (MDATACNESVDGSPVFYLLGIPSLPETFFLP) the chain is on the extracellular side. An N-linked (GlcNAc...) asparagine glycan is attached at N7. A helical transmembrane segment spans residues 32–52 (VFFIFLLFYLLILMGNALILV). The Cytoplasmic portion of the chain corresponds to 53 to 62 (AVVAEPSLHK). A helical membrane pass occupies residues 63-83 (PMYFFLINLSTLDILFTTTTV). Residues 84–102 (PKMLSLFLLGDRFLSFSSC) are Extracellular-facing. C102 and C184 are joined by a disulfide. A helical membrane pass occupies residues 103-123 (LLQMYLFQSFTCSEAFILVVM). Residues 124–145 (AYDRYVAICHPLHYPVLMNPQT) are Cytoplasmic-facing. A helical membrane pass occupies residues 146-166 (NATLAASAWLTALLLPIPAVV). Topologically, residues 167-200 (RTSQMAYNSIAYIYHCFCDHLAVVQASCSDTTPQ) are extracellular. A helical membrane pass occupies residues 201-221 (TLMGFCIAMVVSFLPLLLVLL). The Cytoplasmic segment spans residues 222–245 (SYVHILASVLRISSLEGRAKAFST). The chain crosses the membrane as a helical span at residues 246–266 (CSSHLLVVGTYYSSIAIAYVA). Over 267–276 (YRADLPLDFH) the chain is Extracellular. A helical membrane pass occupies residues 277–297 (IMGNVVYAILTPILNPLIYTL). The Cytoplasmic portion of the chain corresponds to 298–320 (RNRDVKAAITKIMSQDPGCDRSI).

It belongs to the G-protein coupled receptor 1 family. As to expression, detected in the keratinocytes of the epidermis (at protein level). Detected in hair follicles in proximal outer root sheath and hair matrix keratinocytes (at protein level).

It localises to the cell membrane. Functionally, olfactory receptor. Activated by the synthetic sandalwood odorant sandalore. Endogenous ligand is unknown. The activity of this receptor is probably mediated by G proteins which induce elevation of intracellular Ca(2+), a cAMP-dependent pathway and phosphorylation of MAPK1/ERK2, MAPK3/ERK1 and p38 MAPKs. Activation of OR2AT4 induces proliferation, migration, and re-epithelialization during wound-healing processes of keratinocytes. Stimulation of OR2AT4 by sandalore promotes hair growth by decreasing apoptosis and increasing production of the anagen-prolonging growth factor IGF1 as well as other pathways involving various kinases. This Homo sapiens (Human) protein is Olfactory receptor 2AT4.